The following is a 152-amino-acid chain: Large ribosomal subunit protein bL9 (152 aa).

The protein belongs to the bacterial ribosomal protein bL9 family.

Its function is as follows. Binds to the 23S rRNA. In Mycobacterium marinum (strain ATCC BAA-535 / M), this protein is Large ribosomal subunit protein bL9.